The primary structure comprises 263 residues: Zinc finger protein STAMENLESS 1 (263 aa).

Residues 1-51 are disordered; that stretch reads MNSSRRQEGSPLDLNNLPDEFGKQTVESSTTTAASSAEASRVTKKKSNGGK. Low complexity predominate over residues 25–40; it reads TVESSTTTAASSAEAS. The segment at 58–80 adopts a C2H2-type zinc-finger fold; that stretch reads YECRFCSLKFCKSQALGGHMNRH.

As to expression, expressed in leaf primordia, inflorescence meristem, rachis branch meristems, floral meristem and floral organ primordia.

It localises to the nucleus. Its function is as follows. Regulates floral organ identity and cell proliferation in the inner floral whorls. Probably specifies the identities of lodicule and stamen through positive regulation of MADS16 expression. May contribute to morphogenesis by suppressing OSH1 expression in the lateral organs. The chain is Zinc finger protein STAMENLESS 1 (SL1) from Oryza sativa subsp. japonica (Rice).